The sequence spans 909 residues: Epithelial discoidin domain-containing receptor 1 (909 aa).

A signal peptide spans 1–18 (MGPEALSSLLLLLLVASG). The Extracellular portion of the chain corresponds to 21 to 413 (DMKGHFDPAK…VAKAEGSPTA (393 aa)). The region spanning 31 to 181 (CRYALGMQDR…VCLRVELYGC (151 aa)) is the F5/8 type C domain. 2 cysteine pairs are disulfide-bonded: C31/C181 and C70/C173. Positions 45–60 (SDISASSSWSDSTAAR) are enriched in low complexity. Positions 45-65 (SDISASSSWSDSTAARHSSDG) are disordered. The interval 188–363 (LSYTAPVGQT…LFSEISFISD (176 aa)) is DS-like domain. Residues N207, Q226, D229, V231, Y249, and Y251 each contribute to the Ca(2+) site. N-linked (GlcNAc...) asparagine glycosylation occurs at N207. N-linked (GlcNAc...) asparagine glycosylation occurs at N256. C299 and C344 are joined by a disulfide. Ca(2+)-binding residues include S356 and E357. Residues N366 and N390 are each glycosylated (N-linked (GlcNAc...) asparagine). Residues 414–434 (ILIGCLVAIILLLLLIIALML) form a helical membrane-spanning segment. The Cytoplasmic segment spans residues 435–909 (WRLHWRRLLS…FLAEDALNTV (475 aa)). Positions 466–495 (ILINNRPGPREPPPYQEPRPRGNPPHSAPC) are disordered. Over residues 475–492 (REPPPYQEPRPRGNPPHS) the composition is skewed to pro residues. The short motif at 477–480 (PPPY) is the PPxY motif element. Residues Y480, Y509, and Y516 each carry the phosphotyrosine; by autocatalysis modification. A Protein kinase domain is found at 606–901 (LRFKEKLGEG…PPFSQLHRFL (296 aa)). An ATP-binding site is contributed by 612–620 (LGEGQFGEV). A Phosphoserine modification is found at S627. ATP is bound at residue K651. Y736 carries the post-translational modification Phosphotyrosine; by autocatalysis. The Proton acceptor role is filled by D762. Phosphotyrosine; by autocatalysis occurs at positions 788, 792, and 793.

This sequence belongs to the protein kinase superfamily. Tyr protein kinase family. Insulin receptor subfamily. In terms of assembly, homodimer. Interacts (via PPxY motif) with WWC1 (via WW domains) in a collagen-regulated manner. Forms a tripartite complex with WWC1 and PRKCZ, but predominantly in the absence of collagen. Interacts (tyrosine phosphorylated) with SHC1. Interacts with SRC. Interacts with MYH9. Interacts with CDH1. Interacts with PTPN11. Interacts with NCK2. In terms of processing, autophosphorylated in response to fibrillar collagen binding.

Its subcellular location is the cell membrane. It carries out the reaction L-tyrosyl-[protein] + ATP = O-phospho-L-tyrosyl-[protein] + ADP + H(+). Its function is as follows. Tyrosine kinase that functions as a cell surface receptor for fibrillar collagen and regulates cell attachment to the extracellular matrix, remodeling of the extracellular matrix, cell migration, differentiation, survival and cell proliferation. Collagen binding triggers a signaling pathway that involves SRC and leads to the activation of MAP kinases. Regulates remodeling of the extracellular matrix by up-regulation of the matrix metalloproteinases MMP2, MMP7 and MMP9, and thereby facilitates cell migration and wound healing. Promotes smooth muscle cell migration, and thereby contributes to arterial wound healing. Also plays a role in tumor cell invasion. Phosphorylates PTPN11. Required for normal blastocyst implantation during pregnancy, for normal mammary gland differentiation and normal lactation. Required for normal ear morphology and normal hearing. This chain is Epithelial discoidin domain-containing receptor 1 (DDR1), found in Pan troglodytes (Chimpanzee).